The sequence spans 301 residues: tRNA dimethylallyltransferase (301 aa).

Residue 8–15 (GPTAVGKT) participates in ATP binding. 10 to 15 (TAVGKT) contributes to the substrate binding site. The interval 33–36 (DSRQ) is interaction with substrate tRNA.

Belongs to the IPP transferase family. Monomer. Mg(2+) serves as cofactor.

The enzyme catalyses adenosine(37) in tRNA + dimethylallyl diphosphate = N(6)-dimethylallyladenosine(37) in tRNA + diphosphate. Its function is as follows. Catalyzes the transfer of a dimethylallyl group onto the adenine at position 37 in tRNAs that read codons beginning with uridine, leading to the formation of N6-(dimethylallyl)adenosine (i(6)A). The sequence is that of tRNA dimethylallyltransferase from Thermosipho africanus (strain TCF52B).